The primary structure comprises 94 residues: Small ribosomal subunit protein bS6 (94 aa).

The protein belongs to the bacterial ribosomal protein bS6 family.

Binds together with bS18 to 16S ribosomal RNA. The protein is Small ribosomal subunit protein bS6 of Alkaliphilus metalliredigens (strain QYMF).